The chain runs to 755 residues: 3-isopropylmalate dehydratase (755 aa).

3 residues coordinate [4Fe-4S] cluster: Cys353, Cys413, and Cys416. Disordered stretches follow at residues 427–446 (GERCASTSNRNFEGRQGAGG), 471–493 (LTPAQQDRPASPTPKKIETELEP), and 510–529 (DAPATGASPPSPAPSDAAGM). Residues 510-528 (DAPATGASPPSPAPSDAAG) show a composition bias toward low complexity.

Belongs to the aconitase/IPM isomerase family. Monomer. Requires [4Fe-4S] cluster as cofactor.

The catalysed reaction is (2R,3S)-3-isopropylmalate = (2S)-2-isopropylmalate. Its pathway is amino-acid biosynthesis; L-leucine biosynthesis; L-leucine from 3-methyl-2-oxobutanoate: step 2/4. In terms of biological role, catalyzes the isomerization between 2-isopropylmalate and 3-isopropylmalate, via the formation of 2-isopropylmaleate. The protein is 3-isopropylmalate dehydratase (LEUA) of Rhizomucor pusillus.